The primary structure comprises 200 residues: Peptidyl-tRNA hydrolase (200 aa).

Tyrosine 15 contacts tRNA. The active-site Proton acceptor is histidine 20. TRNA is bound by residues tyrosine 66, asparagine 68, and asparagine 114.

This sequence belongs to the PTH family. In terms of assembly, monomer.

The protein localises to the cytoplasm. The catalysed reaction is an N-acyl-L-alpha-aminoacyl-tRNA + H2O = an N-acyl-L-amino acid + a tRNA + H(+). In terms of biological role, hydrolyzes ribosome-free peptidyl-tRNAs (with 1 or more amino acids incorporated), which drop off the ribosome during protein synthesis, or as a result of ribosome stalling. Its function is as follows. Catalyzes the release of premature peptidyl moieties from peptidyl-tRNA molecules trapped in stalled 50S ribosomal subunits, and thus maintains levels of free tRNAs and 50S ribosomes. The protein is Peptidyl-tRNA hydrolase of Paraburkholderia phytofirmans (strain DSM 17436 / LMG 22146 / PsJN) (Burkholderia phytofirmans).